A 332-amino-acid chain; its full sequence is tRNA-dihydrouridine(20/20a) synthase (332 aa).

Residues 19–21 (PML) and Gln-71 contribute to the FMN site. Cys-101 functions as the Proton donor in the catalytic mechanism. Residues Lys-140, His-173, 213–215 (NGG), and 235–236 (GR) each bind FMN.

This sequence belongs to the Dus family. DusA subfamily. Requires FMN as cofactor.

It carries out the reaction 5,6-dihydrouridine(20) in tRNA + NADP(+) = uridine(20) in tRNA + NADPH + H(+). The catalysed reaction is 5,6-dihydrouridine(20) in tRNA + NAD(+) = uridine(20) in tRNA + NADH + H(+). The enzyme catalyses 5,6-dihydrouridine(20a) in tRNA + NADP(+) = uridine(20a) in tRNA + NADPH + H(+). It catalyses the reaction 5,6-dihydrouridine(20a) in tRNA + NAD(+) = uridine(20a) in tRNA + NADH + H(+). Catalyzes the synthesis of 5,6-dihydrouridine (D), a modified base found in the D-loop of most tRNAs, via the reduction of the C5-C6 double bond in target uridines. Specifically modifies U20 and U20a in tRNAs. The chain is tRNA-dihydrouridine(20/20a) synthase from Salmonella typhi.